The following is a 503-amino-acid chain: Cytochrome P450 3A13 (503 aa).

C442 is a heme binding site.

It belongs to the cytochrome P450 family. The cofactor is heme.

The protein resides in the endoplasmic reticulum membrane. It localises to the microsome membrane. The enzyme catalyses an organic molecule + reduced [NADPH--hemoprotein reductase] + O2 = an alcohol + oxidized [NADPH--hemoprotein reductase] + H2O + H(+). Functionally, can activate aflatoxin B1 to a genotoxic product. The chain is Cytochrome P450 3A13 (Cyp3a13) from Mus musculus (Mouse).